A 138-amino-acid polypeptide reads, in one-letter code: Small ribosomal subunit protein uS11c (138 aa).

Residues 1–22 (MTKPIPRIGSRRNGRIGSRKNA) are disordered. A compositionally biased stretch (basic residues) spans 9-22 (GSRRNGRIGSRKNA).

This sequence belongs to the universal ribosomal protein uS11 family. Part of the 30S ribosomal subunit.

It localises to the plastid. The protein resides in the chloroplast. The polypeptide is Small ribosomal subunit protein uS11c (Dioscorea elephantipes (Elephant's foot yam)).